A 184-amino-acid chain; its full sequence is ATP synthase subunit b (184 aa).

Residues 24-44 (ILVVVVGFALLMFIVIKFIVP) form a helical membrane-spanning segment.

It belongs to the ATPase B chain family. In terms of assembly, F-type ATPases have 2 components, F(1) - the catalytic core - and F(0) - the membrane proton channel. F(1) has five subunits: alpha(3), beta(3), gamma(1), delta(1), epsilon(1). F(0) has three main subunits: a(1), b(2) and c(10-14). The alpha and beta chains form an alternating ring which encloses part of the gamma chain. F(1) is attached to F(0) by a central stalk formed by the gamma and epsilon chains, while a peripheral stalk is formed by the delta and b chains.

The protein localises to the cell membrane. F(1)F(0) ATP synthase produces ATP from ADP in the presence of a proton or sodium gradient. F-type ATPases consist of two structural domains, F(1) containing the extramembraneous catalytic core and F(0) containing the membrane proton channel, linked together by a central stalk and a peripheral stalk. During catalysis, ATP synthesis in the catalytic domain of F(1) is coupled via a rotary mechanism of the central stalk subunits to proton translocation. Its function is as follows. Component of the F(0) channel, it forms part of the peripheral stalk, linking F(1) to F(0). The sequence is that of ATP synthase subunit b (atpF) from Micrococcus luteus (strain ATCC 4698 / DSM 20030 / JCM 1464 / CCM 169 / CCUG 5858 / IAM 1056 / NBRC 3333 / NCIMB 9278 / NCTC 2665 / VKM Ac-2230) (Micrococcus lysodeikticus).